An 832-amino-acid chain; its full sequence is MGSLSCSIIHLVLILQLQTFFVFSQNIRNGSVPVGESLTASESQQISSSWRSPSGDFAFGFRKIQPNDGFTLSIWFDKISDKTIVWHAQAVNTTTGLVPNGSKVTLTADGGLVIADPRGQELWRALSGGSVSRGRFTDDGNFVLFRDGSEDSDEVLWSSFENPTDTLLPNQNIEVGRNLSSRRTETSFKKGRFSLRLEDDGNLQLHSLNAETASESDIYSQYYESNTNDPNNPGIQLVFNQSGEIYVLQRNNSRFVVKDRDPDFSIAAPFYISTGFLLSTIIPKEARRIVGGCLLGLCRDNMCSPDDALGNMACGYNNICSLGNNKRPKCECPERFVLKDPSNEYGDCLPDFEMQTCRPENQTANSDVNLYEFITLEKTNWPFGDYESYANYDEERCKASCLSDCLCAAVIFGTNRDLKCWKKKFPLSHGERSPRGDSDTFIKVRNRSIADVPVTGNRAKKLDWLIIACSVLLGTSAFVIFDTSCSYRKTKKSKNMMKNQARDIGRTTATTTANELNLRVFTYGELAEATRDFTEELGRGAFGIVYKGYLEVAGGSEVTVAVKKLDRLDLDNEKEFKNEVKVIGQIHHKNLVRLIGFCNEGQSQMIVYEFLPQGTLANFLFRRPRPSWEDRKNIAVAIARGILYLHEECSEQIIHCDIKPQNILLDEYYTPRISDFGLAKLLLMNQTYTLTNIRGTKGYVAPEWFRNSPITSKVDVYSYGVMLLEIVCCKKAVDLEDNVILINWAYDCFRQGRLEDLTEDDSEAMNDMETVERYVKIAIWCIQEEHGMRPNMRNVTQMLEGVIQVFDPPNPSPYSTFTWSDESLSSDPVSLV.

Residues 1-24 form the signal peptide; it reads MGSLSCSIIHLVLILQLQTFFVFS. Topologically, residues 25 to 461 are extracellular; it reads QNIRNGSVPV…VPVTGNRAKK (437 aa). N-linked (GlcNAc...) asparagine glycans are attached at residues N29, N92, N100, N178, N240, and N251. Residues 37 to 157 enclose the Bulb-type lectin domain; sequence SLTASESQQI…GSEDSDEVLW (121 aa). The region spanning 299–349 is the EGF-like; atypical domain; that stretch reads RDNMCSPDDALGNMACGYNNICSLGNNKRPKCECPERFVLKDPSNEYGDCL. 3 disulfide bridges follow: C303–C320, C314–C330, and C332–C348. The PAN domain maps to 357 to 446; the sequence is CRPENQTANS…DSDTFIKVRN (90 aa). An N-linked (GlcNAc...) asparagine glycan is attached at N361. 2 disulfide bridges follow: C397–C420 and C401–C407. N446 is a glycosylation site (N-linked (GlcNAc...) asparagine). The helical transmembrane segment at 462-482 threads the bilayer; it reads LDWLIIACSVLLGTSAFVIFD. The Cytoplasmic segment spans residues 483–832; that stretch reads TSCSYRKTKK…SLSSDPVSLV (350 aa). Residues 531-803 enclose the Protein kinase domain; sequence RDFTEELGRG…NVTQMLEGVI (273 aa). ATP-binding positions include 537–545 and K563; that span reads LGRGAFGIV. The segment at 622–638 is caM-binding; the sequence is RRPRPSWEDRKNIAVAI. D657 (proton acceptor) is an active-site residue.

Belongs to the protein kinase superfamily. Ser/Thr protein kinase family.

Its subcellular location is the cell membrane. It carries out the reaction L-seryl-[protein] + ATP = O-phospho-L-seryl-[protein] + ADP + H(+). The enzyme catalyses L-threonyl-[protein] + ATP = O-phospho-L-threonyl-[protein] + ADP + H(+). The sequence is that of G-type lectin S-receptor-like serine/threonine-protein kinase RLK1 (RLK1) from Arabidopsis thaliana (Mouse-ear cress).